The sequence spans 300 residues: 4-hydroxy-tetrahydrodipicolinate synthase (300 aa).

Threonine 45 provides a ligand contact to pyruvate. Tyrosine 140 functions as the Proton donor/acceptor in the catalytic mechanism. The active-site Schiff-base intermediate with substrate is the lysine 169. Isoleucine 210 contacts pyruvate.

The protein belongs to the DapA family. Homotetramer; dimer of dimers.

Its subcellular location is the cytoplasm. The catalysed reaction is L-aspartate 4-semialdehyde + pyruvate = (2S,4S)-4-hydroxy-2,3,4,5-tetrahydrodipicolinate + H2O + H(+). It functions in the pathway amino-acid biosynthesis; L-lysine biosynthesis via DAP pathway; (S)-tetrahydrodipicolinate from L-aspartate: step 3/4. In terms of biological role, catalyzes the condensation of (S)-aspartate-beta-semialdehyde [(S)-ASA] and pyruvate to 4-hydroxy-tetrahydrodipicolinate (HTPA). The sequence is that of 4-hydroxy-tetrahydrodipicolinate synthase from Helicobacter pylori (strain J99 / ATCC 700824) (Campylobacter pylori J99).